The chain runs to 453 residues: Zinc finger and BTB domain-containing protein 44 (453 aa).

K4 is covalently cross-linked (Glycyl lysine isopeptide (Lys-Gly) (interchain with G-Cter in SUMO2)). One can recognise a BTB domain in the interval 31-98 (CDITIRVQDK…AYTATLSINT (68 aa)). S135 carries the phosphoserine modification. The interval 135–157 (SQPEKSLDAGQENSSNCNFTSRD) is disordered. The segment covering 145-157 (QENSSNCNFTSRD) has biased composition (polar residues). A phosphoserine mark is found at S159, S161, S165, S191, S194, and S199. A Phosphothreonine modification is found at T200. The interval 241–266 (QPEKAKQAENTRTLELPGPSEAGRRV) is disordered. Residue K290 forms a Glycyl lysine isopeptide (Lys-Gly) (interchain with G-Cter in SUMO2) linkage. 2 disordered regions span residues 295–324 (SDEEVHEEVSQPVSASQSSLSDQQTVPGSE) and 336–366 (SSSIGSVDEGVTEGLPTLQSTSSTNAHADDD). Residues 304-318 (SQPVSASQSSLSDQQ) are compositionally biased toward low complexity. Residues 352–361 (TLQSTSSTNA) show a composition bias toward polar residues. 2 C2H2-type zinc fingers span residues 399 to 421 (FQCPTCGVRFTRIQNLKQHMLIH) and 427 to 449 (FQCDCCGKKFTRAYSLKMHRLKH).

It is found in the nucleus. The polypeptide is Zinc finger and BTB domain-containing protein 44 (Zbtb44) (Mus musculus (Mouse)).